We begin with the raw amino-acid sequence, 191 residues long: Molybdenum cofactor guanylyltransferase (191 aa).

GTP contacts are provided by residues 13 to 15, Lys26, Asp72, and Asp102; that span reads LAG. Asp102 is a binding site for Mg(2+).

This sequence belongs to the MobA family. As to quaternary structure, monomer. Mg(2+) serves as cofactor.

The protein resides in the cytoplasm. It catalyses the reaction Mo-molybdopterin + GTP + H(+) = Mo-molybdopterin guanine dinucleotide + diphosphate. Transfers a GMP moiety from GTP to Mo-molybdopterin (Mo-MPT) cofactor (Moco or molybdenum cofactor) to form Mo-molybdopterin guanine dinucleotide (Mo-MGD) cofactor. The polypeptide is Molybdenum cofactor guanylyltransferase (Pseudomonas entomophila (strain L48)).